Consider the following 216-residue polypeptide: Ras-related protein Rab-2B (216 aa).

Residues Gly-16, Val-17, Gly-18, Lys-19, Ser-20, Cys-21, and Thr-38 each coordinate GTP. Mg(2+) is bound at residue Ser-20. The Switch 1 motif lies at 37–42; that stretch reads LTIGVE. Thr-38 and Asp-61 together coordinate Mg(2+). A Switch 2 motif is present at residues 63-72; sequence AGQESFRSIT. 6 residues coordinate GTP: Gly-64, Asn-119, Lys-120, Asp-122, Ala-150, and Lys-151. Over residues 189-207 the composition is skewed to polar residues; sequence PQQSITSSVGPCSPQQNVS. The disordered stretch occupies residues 189-216; it reads PQQSITSSVGPCSPQQNVSDIGPDSGCC. S-geranylgeranyl cysteine attachment occurs at residues Cys-215 and Cys-216.

Belongs to the small GTPase superfamily. Rab family. Interacts (in GTP-bound form) with GARIN4 (via N-terminus). Interacts (in GTP-bound form) with GARIN5A. Interacts (in GTP-bound form) with GARIN1B. Interacts with VPS39 and VPS41. The cofactor is Mg(2+).

It is found in the cell membrane. Its subcellular location is the endoplasmic reticulum membrane. The protein localises to the golgi apparatus membrane. It localises to the cytoplasmic vesicle. The protein resides in the secretory vesicle. It is found in the acrosome. Its subcellular location is the autophagosome membrane. The enzyme catalyses GTP + H2O = GDP + phosphate + H(+). With respect to regulation, regulated by guanine nucleotide exchange factors (GEFs) which promote the exchange of bound GDP for free GTP, GTPase activating proteins (GAPs) which increase the GTP hydrolysis activity, and GDP dissociation inhibitors (GDIs) which inhibit the dissociation of the nucleotide from the GTPase. Functionally, the small GTPases Rab are key regulators of intracellular membrane trafficking, from the formation of transport vesicles to their fusion with membranes. Rabs cycle between active GTP-bound and inactive GDP-bound states. In their active state, drive transport of vesicular carriers from donor organelles to acceptor organelles to regulate the membrane traffic that maintains organelle identity and morphology. Regulates the compacted morphology of the Golgi. Promotes cytosolic DNA-induced innate immune responses. Regulates IFN responses against DNA viruses by regulating the CGAS-STING signaling axis. Together with RAB2A redundantly required for efficient autophagic flux. This Mus musculus (Mouse) protein is Ras-related protein Rab-2B (Rab2b).